The chain runs to 504 residues: Maturase K (504 aa).

The protein belongs to the intron maturase 2 family. MatK subfamily.

The protein resides in the plastid. The protein localises to the chloroplast. Usually encoded in the trnK tRNA gene intron. Probably assists in splicing its own and other chloroplast group II introns. This chain is Maturase K, found in Turritis glabra (Tower mustard).